We begin with the raw amino-acid sequence, 469 residues long: Zinc transporter SLC39A7 (469 aa).

The chain crosses the membrane as a helical span at residues 10–30 (WVAVGLLTWATLGLLVAELGG). Basic and acidic residues-rich tracts occupy residues 42–56 (FHGHSHRHSHEDFHH) and 66–114 (HTHE…EHSR). The tract at residues 42–121 (FHGHSHRHSH…HSRGGYGESG (80 aa)) is disordered. The residue at position 66 (His-66) is a Pros-methylhistidine. Helical transmembrane passes span 138 to 158 (ALGATVLISAAPFFVLFLIPV), 169 to 189 (LQILLSFASGGLLGDAFLHLI), and 214 to 234 (GPILSVGLWVLSGIVAFLVVE). A compositionally biased stretch (basic residues) spans 242–263 (GGHGHSHGHGHAHSHTHGSHGH). The segment at 242–310 (GGHGHSHGHG…VRPQNAEEEK (69 aa)) is disordered. Basic and acidic residues predominate over residues 264 to 285 (GRQECSTKEKQSSEEEEKETRG). Ser-275 and Ser-276 each carry phosphoserine. Helical transmembrane passes span 386 to 406 (LTAVGALAGTACALLTEGGAV), 410 to 430 (IAGGAGPGWVLPFTAGGFIYV), and 448 to 468 (SLLEVLGLLGGVVMMVLIAHL).

The protein belongs to the ZIP transporter (TC 2.A.5) family. KE4/Catsup subfamily. In terms of assembly, homodimer. In terms of processing, methylation at some His residue by METTL9 leads to reduced zinc-binding. Post-translationally, rapidly phosphorylated by CK2 following Zn(2+) treatment. This phosphorylation is required for efficient cytosolic Zn(2+) release.

Its subcellular location is the endoplasmic reticulum membrane. The protein localises to the golgi apparatus. It is found in the cis-Golgi network membrane. The catalysed reaction is Zn(2+)(in) = Zn(2+)(out). Its function is as follows. Transports Zn(2+) from the endoplasmic reticulum (ER)/Golgi apparatus to the cytosol, playing an essential role in the regulation of cytosolic zinc levels. Acts as a gatekeeper of zinc release from intracellular stores, requiring post-translational activation by phosphorylation, resulting in activation of multiple downstream pathways leading to cell growth and proliferation. Has an essential role in B cell development and is required for proper B cell receptor signaling. Plays an important role in maintaining intestinal epithelial homeostasis and skin dermis development by regulating ER function. Controls cell signaling pathways involved in glucose metabolism in skeletal muscle. Has a protective role against ER stress in different biological contexts. Mediates Zn(2+)-induced ferroptosis. This is Zinc transporter SLC39A7 from Pongo abelii (Sumatran orangutan).